Consider the following 531-residue polypeptide: Polyamine aminopropyltransferase 1 (531 aa).

The next 7 helical transmembrane spans lie at 27-47 (FLLL…ELAL), 59-79 (VLQT…GSLA), 96-116 (GVLA…FAWL), 122-142 (AMIV…PLLM), 160-180 (MFAV…LFLL), 188-208 (GALV…VFIF), and 218-238 (AGLL…YVLA). Residues 205 to 476 (VFIFRRQTGR…VLARPGTEAP (272 aa)) are spermidine synthase. One can recognise a PABS domain in the interval 233–471 (TTYVLADDLE…GNWGFVLARP (239 aa)). Glutamine 263 provides a ligand contact to S-methyl-5'-thioadenosine. Spermidine-binding residues include histidine 298 and aspartate 320. S-methyl-5'-thioadenosine-binding positions include glutamate 340 and 374–375 (DA). Residue aspartate 392 is the Proton acceptor of the active site.

This sequence belongs to the spermidine/spermine synthase family. Homodimer or homotetramer.

The protein resides in the cell membrane. The catalysed reaction is S-adenosyl 3-(methylsulfanyl)propylamine + putrescine = S-methyl-5'-thioadenosine + spermidine + H(+). It participates in amine and polyamine biosynthesis; spermidine biosynthesis; spermidine from putrescine: step 1/1. Functionally, catalyzes the irreversible transfer of a propylamine group from the amino donor S-adenosylmethioninamine (decarboxy-AdoMet) to putrescine (1,4-diaminobutane) to yield spermidine. This Streptomyces coelicolor (strain ATCC BAA-471 / A3(2) / M145) protein is Polyamine aminopropyltransferase 1.